A 420-amino-acid chain; its full sequence is 20-oxo-5-O-mycaminosyltylactone 23-monooxygenase (420 aa).

Positions 1–28 (MSSSGDARPSQKGILLPAARANDTDEAA) are disordered. Residues His118, Arg122, Arg311, His367, and Cys369 each contribute to the heme site.

It belongs to the cytochrome P450 family.

The enzyme catalyses 20-oxo-5-O-beta-D-mycaminosyltylonolide + 2 reduced [2Fe-2S]-[ferredoxin] + O2 + 2 H(+) = 5-O-beta-D-mycaminosyltylonolide + 2 oxidized [2Fe-2S]-[ferredoxin] + H2O. It functions in the pathway antibiotic biosynthesis; tylosin biosynthesis. Its function is as follows. Involved in the biosynthesis of the complex macrolide antibiotic tylosin. Catalyzes the hydroxylation of 20-oxo-5-O-beta-mycaminosyltylactone at the C-23 position to yield 5-O-beta-mycaminosyltylonolide. This Streptomyces fradiae (Streptomyces roseoflavus) protein is 20-oxo-5-O-mycaminosyltylactone 23-monooxygenase.